The following is a 124-amino-acid chain: Small ribosomal subunit protein uS12 (124 aa).

Aspartate 89 is subject to 3-methylthioaspartic acid.

This sequence belongs to the universal ribosomal protein uS12 family. In terms of assembly, part of the 30S ribosomal subunit. Contacts proteins S8 and S17. May interact with IF1 in the 30S initiation complex.

Its function is as follows. With S4 and S5 plays an important role in translational accuracy. In terms of biological role, interacts with and stabilizes bases of the 16S rRNA that are involved in tRNA selection in the A site and with the mRNA backbone. Located at the interface of the 30S and 50S subunits, it traverses the body of the 30S subunit contacting proteins on the other side and probably holding the rRNA structure together. The combined cluster of proteins S8, S12 and S17 appears to hold together the shoulder and platform of the 30S subunit. This is Small ribosomal subunit protein uS12 from Acinetobacter baylyi (strain ATCC 33305 / BD413 / ADP1).